The following is a 406-amino-acid chain: Lissencephaly-1 homolog (406 aa).

The 33-residue stretch at 7–39 folds into the LisH domain; that stretch reads QREELNKAIADYLRSNGYESALEAFQKEAEMPG. Residues 54–81 adopt a coiled-coil conformation; sequence TSVIRLQKKVMDLEAKLAEAEKEFQSGG. The segment covering 74–89 has biased composition (basic and acidic residues); sequence EKEFQSGGPNKKERSP. Residues 74–99 form a disordered region; that stretch reads EKEFQSGGPNKKERSPSEWIPRPPAR. WD repeat units follow at residues 104-145, 146-185, 188-227, 230-269, 272-329, 332-371, and 374-406; these read GHRS…RTLK, GHTD…NIKT, GHDH…CVKT, GHRE…CKAE, EHEH…CIMT, GHDN…CQKT, and AHQH…WECR.

This sequence belongs to the WD repeat LIS1/nudF family.

The protein resides in the cytoplasm. It localises to the cytoskeleton. It is found in the microtubule organizing center. Its subcellular location is the centrosome. In terms of biological role, positively regulates the activity of the minus-end directed microtubule motor protein dynein. May enhance dynein-mediated microtubule sliding by targeting dynein to the microtubule plus end. Required for several dynein- and microtubule-dependent processes. This is Lissencephaly-1 homolog from Branchiostoma floridae (Florida lancelet).